A 317-amino-acid chain; its full sequence is Cyclin-T1-3 (317 aa).

This sequence belongs to the cyclin family. Cyclin T subfamily. Interacts with CDKC-1 and CDKC-2. In terms of tissue distribution, abundantly expressed in flowers. Expressed in roots, seedlings, rosettes and stems.

In Arabidopsis thaliana (Mouse-ear cress), this protein is Cyclin-T1-3 (CYCT1-3).